Reading from the N-terminus, the 343-residue chain is Ribosomal RNA small subunit methyltransferase C (343 aa).

It belongs to the methyltransferase superfamily. RsmC family. As to quaternary structure, monomer.

Its subcellular location is the cytoplasm. It carries out the reaction guanosine(1207) in 16S rRNA + S-adenosyl-L-methionine = N(2)-methylguanosine(1207) in 16S rRNA + S-adenosyl-L-homocysteine + H(+). Specifically methylates the guanine in position 1207 of 16S rRNA in the 30S particle. The chain is Ribosomal RNA small subunit methyltransferase C from Pseudoalteromonas atlantica (strain T6c / ATCC BAA-1087).